A 437-amino-acid polypeptide reads, in one-letter code: FK506-binding protein 3 (437 aa).

3 stretches are compositionally biased toward acidic residues: residues 73-90 (DIEA…EEEE), 106-131 (EEEE…EDVS), and 179-220 (ADED…DASD). 2 disordered regions span residues 73 to 132 (DIEA…DVSE) and 169 to 349 (HLTG…QTAK). Basic and acidic residues-rich tracts occupy residues 256 to 270 (KKED…KDLE) and 292 to 324 (AKKE…EASK). Residues 351–437 (GNKVGIRYIG…TFDIKLVSIK (87 aa)) enclose the PPIase FKBP-type domain.

It belongs to the FKBP-type PPIase family. FKBP3/4 subfamily.

The protein localises to the nucleus. Its subcellular location is the nucleolus. The enzyme catalyses [protein]-peptidylproline (omega=180) = [protein]-peptidylproline (omega=0). With respect to regulation, inhibited by both FK506 and rapamycin. PPIases accelerate the folding of proteins. It catalyzes the cis-trans isomerization of proline imidic peptide bonds in oligopeptides. This chain is FK506-binding protein 3 (FPR3), found in Debaryomyces hansenii (strain ATCC 36239 / CBS 767 / BCRC 21394 / JCM 1990 / NBRC 0083 / IGC 2968) (Yeast).